The following is a 605-amino-acid chain: Protein Spindly (605 aa).

The residue at position 1 (M1) is an N-acetylmethionine. Residues 2–442 adopt a coiled-coil conformation; the sequence is EADIITNLRC…ELKLKYEPEE (441 aa). Residues S513, S515, and S555 each carry the phosphoserine modification. Residues 544–580 form a disordered region; sequence ALSERSGNTPNSPRLAAESKLQTEVKEGKETSSKLEK. Positions 564–580 are enriched in basic and acidic residues; sequence LQTEVKEGKETSSKLEK.

The protein belongs to the Spindly family. Interacts with KNTC1 and ZW10. These interactions appear weak and may be transient or indirect. Interacts with dynein intermediate chain and dynactin (DCTN1). Interacts with the catalytically active form of USP45. In terms of processing, monoubiquitinated with'Lys-48' linkage. Deubiquitinated by USP45.

The protein localises to the cytoplasm. It localises to the cytoskeleton. Its subcellular location is the microtubule organizing center. The protein resides in the centrosome. It is found in the chromosome. The protein localises to the centromere. It localises to the kinetochore. Its subcellular location is the nucleus. The protein resides in the spindle pole. Functionally, required for the localization of dynein and dynactin to the mitotic kintochore. Dynein is believed to control the initial lateral interaction between the kinetochore and spindle microtubules and to facilitate the subsequent formation of end-on kinetochore-microtubule attachments mediated by the NDC80 complex. Also required for correct spindle orientation. Does not appear to be required for the removal of spindle assembly checkpoint (SAC) proteins from the kinetochore upon bipolar spindle attachment. Acts as an adapter protein linking the dynein motor complex to various cargos and converts dynein from a non-processive to a highly processive motor in the presence of dynactin. Facilitates the interaction between dynein and dynactin and activates dynein processivity (the ability to move along a microtubule for a long distance without falling off the track). Plays a role in cell migration. The polypeptide is Protein Spindly (Homo sapiens (Human)).